We begin with the raw amino-acid sequence, 486 residues long: Zinc finger CCCH domain-containing protein 49 (486 aa).

The C3H1-type zinc-finger motif lies at 157–184 (RNRAHVCSFYVRGECTRGAECPYRHEMP). In terms of domain architecture, RRM spans 228 to 301 (RTLYIGGLDS…VRLKLMWGKP (74 aa)). Disordered regions lie at residues 329–348 (SQQQ…QQQP) and 379–486 (LVES…NGMT). 2 stretches are compositionally biased toward low complexity: residues 389-407 (PGPQ…GQSY) and 415-430 (YHGG…YGGY). Over residues 431–444 (MPPPRMPYQQPPQY) the composition is skewed to pro residues. Positions 445–486 (PAYQPMLAPPAQSQASSLQQPAPATQQLGQGPQQQTTQNGMT) are enriched in low complexity.

The chain is Zinc finger CCCH domain-containing protein 49 from Oryza sativa subsp. japonica (Rice).